A 516-amino-acid chain; its full sequence is Ribonuclease Y (516 aa).

Residues 1–21 (MLIKIVIACVITAIIVALIAW) traverse the membrane as a helical segment. The KH domain maps to 206–269 (TISVVQLPND…ETARIALEKL (64 aa)). Residues 332 to 425 (ALKHSIEVAI…VQAADTISAA (94 aa)) form the HD domain.

Belongs to the RNase Y family.

The protein localises to the cell membrane. In terms of biological role, endoribonuclease that initiates mRNA decay. This Lachnoclostridium phytofermentans (strain ATCC 700394 / DSM 18823 / ISDg) (Clostridium phytofermentans) protein is Ribonuclease Y.